The chain runs to 419 residues: UDP-N-acetylglucosamine 1-carboxyvinyltransferase (419 aa).

22-23 (KN) serves as a coordination point for phosphoenolpyruvate. R92 serves as a coordination point for UDP-N-acetyl-alpha-D-glucosamine. Catalysis depends on C116, which acts as the Proton donor. A 2-(S-cysteinyl)pyruvic acid O-phosphothioketal modification is found at C116. Residues 121 to 125 (RPIDL), D306, and I328 contribute to the UDP-N-acetyl-alpha-D-glucosamine site.

The protein belongs to the EPSP synthase family. MurA subfamily.

The protein localises to the cytoplasm. The catalysed reaction is phosphoenolpyruvate + UDP-N-acetyl-alpha-D-glucosamine = UDP-N-acetyl-3-O-(1-carboxyvinyl)-alpha-D-glucosamine + phosphate. It participates in cell wall biogenesis; peptidoglycan biosynthesis. Functionally, cell wall formation. Adds enolpyruvyl to UDP-N-acetylglucosamine. Target for the antibiotic fosfomycin. Involved in heteroresistance to antibiotic fosfomycin. Heteroresistance is the ability of a clonal population to grow one or several subpopulations at a frequency of 10(-7) to 10(-3) in the presence of a higher antibiotic concentration than that predicted to be effective by measurement of the minimum inhibitory concentration (MIC). The polypeptide is UDP-N-acetylglucosamine 1-carboxyvinyltransferase (Streptococcus pneumoniae serotype 2 (strain D39 / NCTC 7466)).